Reading from the N-terminus, the 733-residue chain is Polyribonucleotide nucleotidyltransferase (733 aa).

Asp489 and Asp495 together coordinate Mg(2+). In terms of domain architecture, KH spans 556–615; it reads PKIDTIKIDVDKIKIVIGKGGETIDKIIAETGVKIDIDEEGNVSIYSSDQDAINRAKEII. Positions 625–693 constitute an S1 motif domain; that stretch reads DEVYHAKVVR…AKGRVDASMK (69 aa). Residues 691–733 form a disordered region; the sequence is SMKVLLPRPPKSDKPKHHHDKGHHPHKEYKGHKDHQESPKTEE. Residues 704 to 723 show a composition bias toward basic residues; sequence KPKHHHDKGHHPHKEYKGHK. Residues 724 to 733 are compositionally biased toward basic and acidic residues; the sequence is DHQESPKTEE.

It belongs to the polyribonucleotide nucleotidyltransferase family. Mg(2+) serves as cofactor.

The protein localises to the cytoplasm. It catalyses the reaction RNA(n+1) + phosphate = RNA(n) + a ribonucleoside 5'-diphosphate. Functionally, involved in mRNA degradation. Catalyzes the phosphorolysis of single-stranded polyribonucleotides processively in the 3'- to 5'-direction. This chain is Polyribonucleotide nucleotidyltransferase, found in Streptococcus sanguinis (strain SK36).